A 313-amino-acid polypeptide reads, in one-letter code: Lactamase-like protein nscB (313 aa).

Zn(2+) contacts are provided by His-97, His-99, Asp-101, and His-102. Catalysis depends on Asp-101, which acts as the Proton donor/acceptor.

The protein belongs to the metallo-beta-lactamase superfamily. Zn(2+) is required as a cofactor.

The protein operates within secondary metabolite biosynthesis. In terms of biological role, lactamase-like protein; part of the gene cluster that mediates the biosynthesis of neosartoricin B, a prenylated anthracenone that probably exhibits T-cell antiproliferative activity, suggestive of a physiological role as an immunosuppressive agent. The non-reducing polyketide synthase nscA probably synthesizes and cyclizes the decaketide backbone. The hydrolase nscB then mediates the product release through hydrolysis followed by spontaneous decarboxylation. The prenyltransferase nscD catalyzes the addition of the dimethylallyl group to the aromatic C5. The FAD-dependent monooxygenase nscC is then responsible for the stereospecific hydroxylation at C2. Neosartoricin B can be converted into two additional compounds neosartoricins C and D. Neosartoricin C is a spirocyclic compound that is cyclized through the attack of C3 hydroxyl on C14, followed by dehydration. On the other hand, neosartoricin D is a further cyclized compound in which attack of C2 on C14 in neosartoricin C results in the formation of the acetal-containing dioxabicyclo-octanone ring. Both of these compounds are novel and possibly represent related metabolites of the gene cluster. The sequence is that of Lactamase-like protein nscB from Arthroderma gypseum (strain ATCC MYA-4604 / CBS 118893) (Microsporum gypseum).